Reading from the N-terminus, the 159-residue chain is MDKLKKVLSGQDTEDRSGLSEVVEASSLSWGTRIKGFIACFALGILCSVLGTLLLWVPRKGLGLFAVFYTLGNIMSIGSTVFLMGPLKQLKRMFEPTRLIATILVLLCFALTLCSAFLWNKGLALIFCILQSLALTWYSLSYIPYARDAVKKCFAVCLA.

Met1 carries the post-translational modification N-acetylmethionine. Over 1-36 (MDKLKKVLSGQDTEDRSGLSEVVEASSLSWGTRIKG) the chain is Cytoplasmic. Ser9 carries the post-translational modification Phosphoserine. Residues 37–57 (FIACFALGILCSVLGTLLLWV) form a helical membrane-spanning segment. Over 58-63 (PRKGLG) the chain is Lumenal. A helical membrane pass occupies residues 64–84 (LFAVFYTLGNIMSIGSTVFLM). The Cytoplasmic segment spans residues 85-98 (GPLKQLKRMFEPTR). Residues 99 to 119 (LIATILVLLCFALTLCSAFLW) form a helical membrane-spanning segment. Residues 120–122 (NKG) are Lumenal-facing. A helical membrane pass occupies residues 123–143 (LALIFCILQSLALTWYSLSYI). At 144 to 159 (PYARDAVKKCFAVCLA) the chain is on the cytoplasmic side.

This sequence belongs to the SFT2 family.

The protein localises to the membrane. May be involved in fusion of retrograde transport vesicles derived from an endocytic compartment with the Golgi complex. This chain is Vesicle transport protein SFT2B, found in Mus musculus (Mouse).